Reading from the N-terminus, the 834-residue chain is DNA gyrase subunit A (834 aa).

Positions 34 to 500 (LPDIRDGLKP…ADDIRDIEDI (467 aa)) constitute a Topo IIA-type catalytic domain. Y122 (O-(5'-phospho-DNA)-tyrosine intermediate) is an active-site residue. Residues 527-533 (QRRGGHG) carry the GyrA-box motif. The interval 810 to 834 (LSSNENDDEVLSGSEEECSDTVSLR) is disordered. The span at 814–828 (ENDDEVLSGSEEECS) shows a compositional bias: acidic residues.

Belongs to the type II topoisomerase GyrA/ParC subunit family. Heterotetramer, composed of two GyrA and two GyrB chains. In the heterotetramer, GyrA contains the active site tyrosine that forms a transient covalent intermediate with DNA, while GyrB binds cofactors and catalyzes ATP hydrolysis.

The protein localises to the cytoplasm. The enzyme catalyses ATP-dependent breakage, passage and rejoining of double-stranded DNA.. A type II topoisomerase that negatively supercoils closed circular double-stranded (ds) DNA in an ATP-dependent manner to modulate DNA topology and maintain chromosomes in an underwound state. Negative supercoiling favors strand separation, and DNA replication, transcription, recombination and repair, all of which involve strand separation. Also able to catalyze the interconversion of other topological isomers of dsDNA rings, including catenanes and knotted rings. Type II topoisomerases break and join 2 DNA strands simultaneously in an ATP-dependent manner. This chain is DNA gyrase subunit A, found in Chlamydia pneumoniae (Chlamydophila pneumoniae).